The chain runs to 1100 residues: Sorbin and SH3 domain-containing protein 2 (1100 aa).

A phosphoserine mark is found at Tyr13, Ser14, His27, Gly28, Ser30, and Ser43. A compositionally biased stretch (polar residues) spans 30–52; the sequence is SLDSTDTYPQHAQSLDGTTSSSI. Residues 30-57 are disordered; that stretch reads SLDSTDTYPQHAQSLDGTTSSSIPLYRS. The region spanning 66 to 127 is the SoHo domain; that stretch reads VIKAPHYPGI…YNTPYTYNAG (62 aa). A compositionally biased stretch (polar residues) spans 134-147; it reads SAQSHPAAKTQTYR. The disordered stretch occupies residues 134–311; the sequence is SAQSHPAAKT…SPSRAKGGDD (178 aa). An Alanine amide modification is found at His153. Ser154 and Ser157 each carry phosphoserine. Residues 167–180 show a composition bias toward pro residues; that stretch reads PVPPPHVPPPVPPL. The span at 181 to 217 shows a compositional bias: basic and acidic residues; sequence RPRDRSSTEKHDWDPPDRKVDTRKFRSEPRSIFEYEP. Ser234 and Ile236 each carry phosphothreonine. Residues Ser239, Ser245, Ser248, Lys258, Ser259, and Glu260 each carry the phosphoserine modification. Phosphothreonine occurs at positions 277, 280, and 282. At Ser287 the chain carries Phosphoserine. The span at 287 to 304 shows a compositional bias: low complexity; the sequence is SSTTLTKSFTSSSPSSPS. Thr292 is subject to Phosphothreonine. Phosphoserine occurs at positions 295, 297, 298, 299, 301, 302, 304, 306, 311, and 316. Residues Ser320, Ser322, and Gly326 each carry the phosphothreonine modification. Residues His341, Val344, and Arg346 each carry the phosphoserine modification. Glu366 carries the post-translational modification Phosphothreonine. Ser381 and Ser383 each carry phosphoserine. Asp413 and Lys415 each carry phosphothreonine. Phosphoserine occurs at positions 437 and 439. Ile459 bears the Phosphothreonine mark. Lys474, Ser494, Ser497, Ser550, and Ser750 each carry phosphoserine. Residues 807 to 866 form a disordered region; the sequence is RMPRSASFQDVDTANSSCHHQDRGGALQDRESPRSYSSTLTDMGRSAPRERRGTPEKEKL. Residues 812–824 show a composition bias toward polar residues; sequence ASFQDVDTANSSC. Positions 825-839 are enriched in basic and acidic residues; it reads HHQDRGGALQDRESP. The residue at position 843 (Ser843) is a Phosphoserine. Residues 853 to 866 show a composition bias toward basic and acidic residues; the sequence is APRERRGTPEKEKL. SH3 domains lie at 863-922 and 938-999; these read KEKL…KLTP and GEIG…VVKK. Ser1017 and Ser1023 each carry phosphoserine. The SH3 3 domain maps to 1041-1100; that stretch reads GGGEPFQALYNYTPRNEDELELRESDVIDVMEKCDDGWFVGTSRRTKFFGTFPGNYVKRL.

As to quaternary structure, interacts with ABL, CBL, DNM1, DNM2, FLOT1, AFDN, PTK2B/PYK2, SAPAP, SPTAN1, SYNJ1, SYNJ2, VCL/vinculin and WASF. Interacts with ABL1/c-Abl, ABL2/v-Abl/Arg, ACTN, CBL and PALLD. Interacts with PTPN12 and WASF1 via its SH3 domains; this interaction may mediate the partial PTPN12 and WASF1 translocation to focal adhesion sites. In terms of processing, ubiquitinated by CBL. Post-translationally, dephosphorylated by PTPN12. In terms of tissue distribution, abundantly expressed in heart. In cardiac muscle cells, located in the Z-disks of sarcomere. Also found, but to a lower extent, in small and large intestine, pancreas, thymus, colon, spleen, prostate, testis, brain, ovary and epithelial cells. In the pancreas, mainly expressed in acinar cells, duct cells and all cell types in islets (at protein level). Tends to be down-regulated in pancreatic adenocarcinomas ans metastases.

It localises to the cytoplasm. Its subcellular location is the perinuclear region. The protein localises to the apical cell membrane. The protein resides in the cell junction. It is found in the focal adhesion. It localises to the cell projection. Its subcellular location is the lamellipodium. Functionally, adapter protein that plays a role in the assembling of signaling complexes, being a link between ABL kinases and actin cytoskeleton. Can form complex with ABL1 and CBL, thus promoting ubiquitination and degradation of ABL1. May play a role in the regulation of pancreatic cell adhesion, possibly by acting on WASF1 phosphorylation, enhancing phosphorylation by ABL1, as well as dephosphorylation by PTPN12. Isoform 6 increases water and sodium absorption in the intestine and gall-bladder. This Homo sapiens (Human) protein is Sorbin and SH3 domain-containing protein 2 (SORBS2).